We begin with the raw amino-acid sequence, 277 residues long: Ribosomal RNA small subunit methyltransferase A (277 aa).

S-adenosyl-L-methionine is bound by residues histidine 20, leucine 22, glycine 47, glutamate 71, aspartate 94, and asparagine 116.

This sequence belongs to the class I-like SAM-binding methyltransferase superfamily. rRNA adenine N(6)-methyltransferase family. RsmA subfamily.

The protein localises to the cytoplasm. It catalyses the reaction adenosine(1518)/adenosine(1519) in 16S rRNA + 4 S-adenosyl-L-methionine = N(6)-dimethyladenosine(1518)/N(6)-dimethyladenosine(1519) in 16S rRNA + 4 S-adenosyl-L-homocysteine + 4 H(+). Functionally, specifically dimethylates two adjacent adenosines (A1518 and A1519) in the loop of a conserved hairpin near the 3'-end of 16S rRNA in the 30S particle. May play a critical role in biogenesis of 30S subunits. The polypeptide is Ribosomal RNA small subunit methyltransferase A (Burkholderia sp).